The sequence spans 139 residues: MPRGVYLGFDFGYKRIGVAVGQRLTCSASPLSTIEAKAGIPDWNTIQKVITQWNPQALIVGLPTCIDDRELYTTSAARRFAKQLHKRFSLPVHLVDERLSTVEARGYLFEQGGYRQIKKAEVDSIAACVILEQWLQQSE.

This sequence belongs to the YqgF nuclease family.

It is found in the cytoplasm. Functionally, could be a nuclease involved in processing of the 5'-end of pre-16S rRNA. The chain is Putative pre-16S rRNA nuclease from Legionella pneumophila subsp. pneumophila (strain Philadelphia 1 / ATCC 33152 / DSM 7513).